The sequence spans 594 residues: Neopentalenolactone D synthase (594 aa).

FAD is bound by residues 64–65 (IG), 86–87 (DK), 94–95 (TW), 106–107 (DV), Y112, V156, and M494.

This sequence belongs to the FAD-binding monooxygenase family. Requires FAD as cofactor.

The catalysed reaction is 1-deoxy-11-oxopentalenate + NADPH + O2 + H(+) = neopentalenolactone D + NADP(+) + H2O. It functions in the pathway antibiotic biosynthesis; neopentalenolactone biosynthesis. Its function is as follows. Catalyzes the flavin-dependent Baeyer-Villiger oxidation of 1-deoxy-11-oxopentalenic acid to neopentalenolactone D in the biosynthesis of neopentalenolactone antibiotic. The sequence is that of Neopentalenolactone D synthase (ptlE) from Streptomyces avermitilis (strain ATCC 31267 / DSM 46492 / JCM 5070 / NBRC 14893 / NCIMB 12804 / NRRL 8165 / MA-4680).